The chain runs to 753 residues: Glycerophosphodiester phosphodiesterase GDPDL6 (753 aa).

Residues 1–17 (MLRFFILFSLFLHSSVA) form the signal peptide. 2 GP-PDE domains span residues 41–339 (PAVV…SQSI) and 355–654 (ALVI…TRYL). Residues N304, N516, N603, and N715 are each glycosylated (N-linked (GlcNAc...) asparagine). The interval 707 to 729 (PPVAKLASNGTEGGPPQTPPRSG) is disordered. A helical membrane pass occupies residues 731-751 (VAIAANLSLSLLAMMALGLLY).

It belongs to the glycerophosphoryl diester phosphodiesterase family. As to expression, expressed in flowers and siliques.

Its subcellular location is the membrane. It catalyses the reaction a sn-glycero-3-phosphodiester + H2O = an alcohol + sn-glycerol 3-phosphate + H(+). The chain is Glycerophosphodiester phosphodiesterase GDPDL6 from Arabidopsis thaliana (Mouse-ear cress).